A 1164-amino-acid polypeptide reads, in one-letter code: DNA-directed RNA polymerase 132 kDa polypeptide (1164 aa).

Belongs to the RNA polymerase beta chain family. As to quaternary structure, the DNA-dependent RNA polymerase used for intermediate and late genes expression consists of eight subunits (147) kDa, (133) kDa, (35) kDa, (30) kDa, (22) kDa, (19) kDa, (18) kDa and (7) kDa totalling more than 500 kDa in mass. The same holoenzyme, with the addition of the transcription-specificity factor RAP94, is used for early gene expression.

The protein resides in the virion. The enzyme catalyses RNA(n) + a ribonucleoside 5'-triphosphate = RNA(n+1) + diphosphate. Functionally, part of the DNA-dependent RNA polymerase which catalyzes the transcription of viral DNA into RNA using the four ribonucleoside triphosphates as substrates. Responsible for the transcription of early, intermediate and late genes. DNA-dependent RNA polymerase associates with the early transcription factor (ETF), itself composed of D6 and A7, thereby allowing the early genes transcription. Late transcription, and probably also intermediate transcription, require newly synthesized RNA polymerase. This Cowpox virus (strain GRI-90 / Grishak) (CPV) protein is DNA-directed RNA polymerase 132 kDa polypeptide (RPO132).